The sequence spans 84 residues: Venom protein SynTx (84 aa).

A signal peptide spans 1–19; the sequence is TLLLTLVVVTIVCLDLGYT. 4 disulfides stabilise this stretch: Cys22–Cys43, Cys36–Cys61, Cys65–Cys76, and Cys77–Cys82.

This sequence belongs to the three-finger toxin family. Short-chain subfamily. Aminergic toxin sub-subfamily. In terms of assembly, homodimer; disulfide-linked. In terms of tissue distribution, expressed by the venom gland.

It is found in the secreted. This protein shows a synergetic toxic effect in that it enhances the toxicity of other toxins. The chain is Venom protein SynTx from Dendroaspis jamesoni jamesoni (Jameson's mamba).